Here is a 1202-residue protein sequence, read N- to C-terminus: Probable DNA polymerase (1202 aa).

Belongs to the DNA polymerase type-B family.

It localises to the mitochondrion. It catalyses the reaction DNA(n) + a 2'-deoxyribonucleoside 5'-triphosphate = DNA(n+1) + diphosphate. The protein is Probable DNA polymerase of Ascobolus immersus.